A 437-amino-acid chain; its full sequence is MEKELRSTILFNAYKKEIFTTNNGYKSMQKKLRSNWKIQSLKDEITSEKLNGVKLWITAGPREKFTAAEFEILKKYLDTGGDVFVMLGEGGESRFDTNINFLLEEYGIMVNNDAVVRNVYHKYFHPKEALVSSGVLNREISRAAGKAVPGIIDEESSGNNAQALTFVYPFGATLSVMKPAVAVLSTGSVCFPLNRPILAFYHSKNQGGKLAVLGSCHMFSDQYLDKEENSKIMDVVFQWLTTGDIHLNQIDAEDPEISDYMMLPYTATLSKRNRECLQESDEIPRDFTTLFDLSIFQLDTTSFHSVIEAHEQLNVKHEPLQLIQPQFETPLPTLQPAVFPPSFRELPPPPLELFDLDETFSSEKARLAQITNKCTEEDLEFYVRKCGDILGVTSKLPKDQQDAKHILEHVFFQVVEFKKLNQEHDIDTSETAFQNNF.

Component of the IFT complex B, at least composed of IFT20, IFT22, IFT25, IFT27, IFT46, IFT52, TRAF3IP1/IFT54, IFT57, IFT74, IFT80, IFT81, and IFT88. Interacts with IFT88. Interacts with TTC25. Interacts with TTC21A. Interacts with IFT70A1, IFT70A2, IFT70B and KIF17. Interacts with USH1G.

Its subcellular location is the cell projection. The protein resides in the cilium. In terms of biological role, involved in ciliogenesis as part of a complex involved in intraflagellar transport (IFT), the bi-directional movement of particles required for the assembly, maintenance and functioning of primary cilia. Required for the anterograde transport of IFT88. This Homo sapiens (Human) protein is Intraflagellar transport protein 52 homolog (IFT52).